The chain runs to 1755 residues: Transposon Ty1-OR Gag-Pol polyprotein (1755 aa).

Composition is skewed to polar residues over residues 1-10, 48-60, and 127-152; these read MESQQLSNYP, TKANSQQTTTPAS, and QSQFPQYPSSVGTPLSTPSPESGNTF. 3 disordered regions span residues 1–93, 126–173, and 352–421; these read MESQ…MMTQ, PQSQ…RPPP, and GSRN…SKST. Low complexity predominate over residues 153–165; sequence TDSSSADSDMTST. The segment at 299 to 401 is RNA-binding; it reads NNGIHINNKV…NSKSKTARAH (103 aa). The span at 402 to 418 shows a compositional bias: low complexity; the sequence is NVSTSNNSPSTDNDSIS. Phosphoserine is present on Ser-416. The active-site For protease activity; shared with dimeric partner is Asp-461. Positions 583 to 640 are integrase-type zinc finger-like; the sequence is NVHTSESTRKYPYPFIHRMLAHANAQTIRYSLKNNTITYFNESDVDWSSAIDYQCPDC. An Integrase catalytic domain is found at 660-835; it reads NSYEPFQYLH…AGLDISTLLP (176 aa). Mg(2+) contacts are provided by Asp-671 and Asp-736. Disordered regions lie at residues 956 to 1087, 1092 to 1111, and 1130 to 1187; these read SKAV…ETEK, RSPSIDASPPENNSSHNIVP, and DLPL…DNET. Low complexity predominate over residues 960-969; it reads SPTDSTPPST. Residues 1005–1015 are compositionally biased toward polar residues; sequence STPQISNIEST. Over residues 1038 to 1053 the composition is skewed to basic and acidic residues; the sequence is ESSHASKSKDFRHSDS. 2 stretches are compositionally biased toward polar residues: residues 1054-1082 and 1101-1111; these read YSENETNHTNVPISSTGGTNNKTVPQISD and PENNSSHNIVP. The Bipartite nuclear localization signal motif lies at 1178-1212; sequence KKRSLEDNETEIKVSRDTWNTKNMRSLEPPRSKKR. One can recognise a Reverse transcriptase Ty1/copia-type domain in the interval 1338–1476; it reads NNYYITQLDI…DILGLEIKYQ (139 aa). Mg(2+) contacts are provided by Asp-1346, Asp-1427, Asp-1428, Asp-1610, Glu-1652, and Asp-1685. The RNase H Ty1/copia-type domain maps to 1610–1752; sequence DASYGNQPYY…IKTFKLLTNK (143 aa).

The capsid protein forms a homotrimer, from which the VLPs are assembled. The protease is a homodimer, whose active site consists of two apposed aspartic acid residues. Initially, virus-like particles (VLPs) are composed of the structural unprocessed proteins Gag and Gag-Pol, and also contain the host initiator methionine tRNA (tRNA(i)-Met) which serves as a primer for minus-strand DNA synthesis, and a dimer of genomic Ty RNA. Processing of the polyproteins occurs within the particle and proceeds by an ordered pathway, called maturation. First, the protease (PR) is released by autocatalytic cleavage of the Gag-Pol polyprotein yielding capsid protein p45 and a Pol-p154 precursor protein. This cleavage is a prerequisite for subsequent processing of Pol-p154 at the remaining sites to release the mature structural and catalytic proteins. Maturation takes place prior to the RT reaction and is required to produce transposition-competent VLPs.

The protein localises to the cytoplasm. It localises to the nucleus. It catalyses the reaction DNA(n) + a 2'-deoxyribonucleoside 5'-triphosphate = DNA(n+1) + diphosphate. The catalysed reaction is Endonucleolytic cleavage to 5'-phosphomonoester.. Its function is as follows. Capsid protein (CA) is the structural component of the virus-like particle (VLP), forming the shell that encapsulates the retrotransposons dimeric RNA genome. The particles are assembled from trimer-clustered units and there are holes in the capsid shells that allow for the diffusion of macromolecules. CA also has nucleocapsid-like chaperone activity, promoting primer tRNA(i)-Met annealing to the multipartite primer-binding site (PBS), dimerization of Ty1 RNA and initiation of reverse transcription. In terms of biological role, the aspartyl protease (PR) mediates the proteolytic cleavages of the Gag and Gag-Pol polyproteins after assembly of the VLP. Reverse transcriptase/ribonuclease H (RT) is a multifunctional enzyme that catalyzes the conversion of the retro-elements RNA genome into dsDNA within the VLP. The enzyme displays a DNA polymerase activity that can copy either DNA or RNA templates, and a ribonuclease H (RNase H) activity that cleaves the RNA strand of RNA-DNA heteroduplexes during plus-strand synthesis and hydrolyzes RNA primers. The conversion leads to a linear dsDNA copy of the retrotransposon that includes long terminal repeats (LTRs) at both ends. Functionally, integrase (IN) targets the VLP to the nucleus, where a subparticle preintegration complex (PIC) containing at least integrase and the newly synthesized dsDNA copy of the retrotransposon must transit the nuclear membrane. Once in the nucleus, integrase performs the integration of the dsDNA into the host genome. In Saccharomyces cerevisiae (strain ATCC 204508 / S288c) (Baker's yeast), this protein is Transposon Ty1-OR Gag-Pol polyprotein (TY1B-OR).